We begin with the raw amino-acid sequence, 335 residues long: Protein FATTY ACID EXPORT 3, chloroplastic (335 aa).

A chloroplast-targeting transit peptide spans 1-72; sequence MMSIPMELMS…PEVLLNRSVV (72 aa). A disordered region spans residues 82–101; that stretch reads GESGVEVGKEKSDIDVEDDT. The span at 88–101 shows a compositional bias: basic and acidic residues; that stretch reads VGKEKSDIDVEDDT. Residues 101–160 are a coiled coil; that stretch reads TSKEAWKQTLESFKEQVSKMQSVSSEAYSVNSQKAMTVLKETSEQLRIQAEKAKEELGTK. The next 3 helical transmembrane spans lie at 205–225, 228–248, and 286–306; these read FHVGIPYGLLLLVGGFINFMV, SIPAIRFGVILGGALFALSLA, and STFLGFFTTLTSGGVLGFYLY. Residues 316–335 are disordered; the sequence is PTLEDGGEDESSDGFVRSEG.

Belongs to the TMEM14 family.

The protein localises to the plastid. It is found in the chloroplast membrane. Its function is as follows. May be involved in free fatty acids export from the plastids. The sequence is that of Protein FATTY ACID EXPORT 3, chloroplastic from Arabidopsis thaliana (Mouse-ear cress).